Consider the following 298-residue polypeptide: MKNVHNTIDEARLGIMLNDLRLPTIKTLWPQFAEQADREGWPAARFLSAIAEHELAERAHRRIERHLAEAHLPPGKTLESFAFDAVPMVSKAQVMAIAAGDSWLAKGANILLFGPPGGGKSHLAAAIGLALIENGWRVLFTRTTDLVQKLQVARRELQLESAIAKLDKFDLLILDDLAYVTKDQAETSVLFELISARYERRSIMITANQPFGEWNRVFPDPAMTLAAVDRLVHHATIFEMNVESYRRRSAMEAKRHRGRPAAFATTKSASLIVAERQSEHDETLASDNQHDTFMPTAT.

114–121 (GPPGGGKS) contacts ATP. The interval 276–298 (RQSEHDETLASDNQHDTFMPTAT) is disordered.

The protein belongs to the IS21/IS1162 putative ATP-binding protein family.

This Sinorhizobium fredii (strain NBRC 101917 / NGR234) protein is Putative insertion sequence ATP-binding protein y4iQ/y4nD/y4sD.